We begin with the raw amino-acid sequence, 226 residues long: 3-dehydroquinate dehydratase (226 aa).

Residues serine 9, 32–34 (EVR), and arginine 59 contribute to the 3-dehydroquinate site. The Proton donor/acceptor role is filled by histidine 119. Catalysis depends on lysine 146, which acts as the Schiff-base intermediate with substrate. Residues arginine 187, threonine 208, and glutamine 212 each coordinate 3-dehydroquinate.

The protein belongs to the type-I 3-dehydroquinase family. As to quaternary structure, homodimer.

The catalysed reaction is 3-dehydroquinate = 3-dehydroshikimate + H2O. The protein operates within metabolic intermediate biosynthesis; chorismate biosynthesis; chorismate from D-erythrose 4-phosphate and phosphoenolpyruvate: step 3/7. Involved in the third step of the chorismate pathway, which leads to the biosynthesis of aromatic amino acids. Catalyzes the cis-dehydration of 3-dehydroquinate (DHQ) and introduces the first double bond of the aromatic ring to yield 3-dehydroshikimate. The polypeptide is 3-dehydroquinate dehydratase (Desulfotalea psychrophila (strain LSv54 / DSM 12343)).